The sequence spans 479 residues: Ribosomal RNA small subunit methyltransferase F (479 aa).

S-adenosyl-L-methionine is bound by residues 125-131, Glu-149, Asp-176, and Asp-194; that span reads AAAPGSK. Cys-247 serves as the catalytic Nucleophile.

The protein belongs to the class I-like SAM-binding methyltransferase superfamily. RsmB/NOP family.

It localises to the cytoplasm. It carries out the reaction cytidine(1407) in 16S rRNA + S-adenosyl-L-methionine = 5-methylcytidine(1407) in 16S rRNA + S-adenosyl-L-homocysteine + H(+). Its function is as follows. Specifically methylates the cytosine at position 1407 (m5C1407) of 16S rRNA. This chain is Ribosomal RNA small subunit methyltransferase F, found in Escherichia coli (strain UTI89 / UPEC).